A 285-amino-acid chain; its full sequence is Transmembrane protein DDB_G0269096 (285 aa).

Disordered stretches follow at residues 1–25 (MEDR…MSQS) and 59–87 (SFEN…NNKN). Composition is skewed to low complexity over residues 12 to 25 (SDIS…MSQS) and 65 to 85 (NNNN…NNNN). A run of 5 helical transmembrane segments spans residues 124-144 (LEEI…LALI), 152-172 (AQMQ…FGVP), 182-202 (LIMG…ALVY), 205-225 (ANFE…MQFT), and 250-270 (FYFI…TALV).

Its subcellular location is the membrane. In Dictyostelium discoideum (Social amoeba), this protein is Transmembrane protein DDB_G0269096.